The sequence spans 245 residues: Ubiquinone biosynthesis O-methyltransferase (245 aa).

Positions 44, 64, 85, and 129 each coordinate S-adenosyl-L-methionine.

Belongs to the methyltransferase superfamily. UbiG/COQ3 family.

It carries out the reaction a 3-demethylubiquinol + S-adenosyl-L-methionine = a ubiquinol + S-adenosyl-L-homocysteine + H(+). The enzyme catalyses a 3-(all-trans-polyprenyl)benzene-1,2-diol + S-adenosyl-L-methionine = a 2-methoxy-6-(all-trans-polyprenyl)phenol + S-adenosyl-L-homocysteine + H(+). Its pathway is cofactor biosynthesis; ubiquinone biosynthesis. Its function is as follows. O-methyltransferase that catalyzes the 2 O-methylation steps in the ubiquinone biosynthetic pathway. The protein is Ubiquinone biosynthesis O-methyltransferase of Proteus mirabilis (strain HI4320).